We begin with the raw amino-acid sequence, 703 residues long: Calcium-responsive transcription factor (703 aa).

Disordered regions lie at residues 1–61, 130–150, and 517–539; these read MEQS…QNIP, GPLVDENSPQDVSEEKPSDRN, and GNSQGESVSSKLETNQTRNSLSP. A compositionally biased stretch (basic and acidic residues) spans 9 to 22; that stretch reads KVNHNDSEESKTDS. Over residues 23 to 34 the composition is skewed to polar residues; it reads QHLTYMDSSEPS.

The protein localises to the nucleus. Its function is as follows. Acts as a transcriptional activator that mediates the calcium- and neuron-selective induction of BDNF exon III transcription. Binds to the consensus calcium-response element CaRE1 5'-CTATTTCGAG-3' sequence. In Bos taurus (Bovine), this protein is Calcium-responsive transcription factor (CARF).